A 113-amino-acid chain; its full sequence is Histone H2B (113 aa).

The disordered stretch occupies residues 1–21 (MPATPAKRAKRVQQEKRHHKK). Basic residues predominate over residues 7–21 (KRAKRVQQEKRHHKK). Residue lysine 109 forms a Glycyl lysine isopeptide (Lys-Gly) (interchain with G-Cter in ubiquitin) linkage.

This sequence belongs to the histone H2B family. The nucleosome is a histone octamer containing two molecules each of H2A, H2B, H3 and H4 assembled in one H3-H4 heterotetramer and two H2A-H2B heterodimers. The octamer wraps approximately 147 bp of DNA. Post-translationally, monoubiquitination of Lys-109 gives a specific tag for epigenetic transcriptional activation and is also prerequisite for histone H3 'Lys-4' and 'Lys-79' methylation.

The protein localises to the nucleus. Its subcellular location is the chromosome. Core component of nucleosome. Nucleosomes wrap and compact DNA into chromatin, limiting DNA accessibility to the cellular machineries which require DNA as a template. Histones thereby play a central role in transcription regulation, DNA repair, DNA replication and chromosomal stability. DNA accessibility is regulated via a complex set of post-translational modifications of histones, also called histone code, and nucleosome remodeling. The protein is Histone H2B (H2B1) of Euplotes crassus.